Here is a 63-residue protein sequence, read N- to C-terminus: Prokaryotic ubiquitin-like protein Pup (63 aa).

The segment at 1–28 (MPQEFEQIRSADQPLDSEESAPVAGART) is disordered. Residues 19–57 (ESAPVAGARTDDTVDALDAVLDDIESVLETNAEEYVGSF) form an ARC ATPase binding region. Glu63 participates in a covalent cross-link: Isoglutamyl lysine isopeptide (Glu-Lys) (interchain with K-? in acceptor proteins).

The protein belongs to the prokaryotic ubiquitin-like protein family. In terms of assembly, strongly interacts with the proteasome-associated ATPase ARC through a hydrophobic interface; the interacting region of Pup lies in its C-terminal half. There is one Pup binding site per ARC hexamer ring.

It functions in the pathway protein degradation; proteasomal Pup-dependent pathway. Functionally, protein modifier that is covalently attached to lysine residues of substrate proteins, thereby targeting them for proteasomal degradation. The tagging system is termed pupylation. The chain is Prokaryotic ubiquitin-like protein Pup from Bifidobacterium dentium (strain ATCC 27534 / DSM 20436 / JCM 1195 / Bd1).